A 342-amino-acid polypeptide reads, in one-letter code: MNIPIDRVTQLQDIYIFETAINQTVSNIQKKKKNYFRVSLVLLTLLIISLVWCFSKYKLQQQEFIINNGNNSNIQQLQQQQQLNNLDSTTIYTTNDNGDINFHNDNNNNNNYRDNQSSNQKIEQQTLTALDYSLLFLPSSVLSLSLIFSLIIYFSIDDPFLFITRCNSTLYLFNIYYCFSNKKIMILPKKQLNNNYYSSDNYSNYQQQPQQQPQQQQQYNTGYNQHQYTDENEYNHRGNRLVSNPSSTIQRNKKFDTNNNYNFNNNNYNYNSNFNNNNNNNNINNNNNNTNNSNINIISNNNNNINNNNNIINNNNNNNNNNNINNSAYSNFNNSNGYNYTN.

Helical transmembrane passes span Tyr-35–Ser-55, Leu-134–Phe-154, and Leu-161–Ser-180. Disordered regions lie at residues Ser-198–Asn-220 and Ile-311–Asn-342.

The protein resides in the membrane. This is an uncharacterized protein from Dictyostelium discoideum (Social amoeba).